The primary structure comprises 44 residues: Photosystem I reaction center subunit IX (44 aa).

The chain crosses the membrane as a helical span at residues tyrosine 7–isoleucine 27.

The protein belongs to the PsaJ family.

Its subcellular location is the plastid. It localises to the chloroplast thylakoid membrane. In terms of biological role, may help in the organization of the PsaE and PsaF subunits. The polypeptide is Photosystem I reaction center subunit IX (Liriodendron tulipifera (Tuliptree)).